A 321-amino-acid polypeptide reads, in one-letter code: Mitochondrial thiamine pyrophosphate carrier 1 (321 aa).

Solcar repeat units follow at residues 12–110 (GSRQ…ISQM), 121–207 (PSSA…LKPV), and 216–311 (PLGS…AMGI). Helical transmembrane passes span 17–38 (VVVA…LDVI), 91–107 (LLYL…YTNI), 127–147 (FISG…LDLL), 182–199 (GLGA…LFFA), 213–231 (LPLP…ASVV), and 286–303 (GLTV…VTMW).

It belongs to the mitochondrial carrier (TC 2.A.29) family.

The protein resides in the mitochondrion inner membrane. Functionally, mitochondrial transporter that mediates uptake of thiamine pyrophosphate (ThPP) into mitochondria. The polypeptide is Mitochondrial thiamine pyrophosphate carrier 1 (TPC1) (Phaeosphaeria nodorum (strain SN15 / ATCC MYA-4574 / FGSC 10173) (Glume blotch fungus)).